A 219-amino-acid polypeptide reads, in one-letter code: Thiamine-phosphate synthase (219 aa).

4-amino-2-methyl-5-(diphosphooxymethyl)pyrimidine is bound by residues 48–52 (QFRQK) and Asn84. The Mg(2+) site is built by Asp85 and Asp104. 4-amino-2-methyl-5-(diphosphooxymethyl)pyrimidine is bound at residue Ser123. 2-[(2R,5Z)-2-carboxy-4-methylthiazol-5(2H)-ylidene]ethyl phosphate is bound at residue 150-152 (TQS). Residue Lys153 coordinates 4-amino-2-methyl-5-(diphosphooxymethyl)pyrimidine. Residues Gly181 and 199–200 (IS) contribute to the 2-[(2R,5Z)-2-carboxy-4-methylthiazol-5(2H)-ylidene]ethyl phosphate site.

The protein belongs to the thiamine-phosphate synthase family. Mg(2+) is required as a cofactor.

It catalyses the reaction 2-[(2R,5Z)-2-carboxy-4-methylthiazol-5(2H)-ylidene]ethyl phosphate + 4-amino-2-methyl-5-(diphosphooxymethyl)pyrimidine + 2 H(+) = thiamine phosphate + CO2 + diphosphate. The catalysed reaction is 2-(2-carboxy-4-methylthiazol-5-yl)ethyl phosphate + 4-amino-2-methyl-5-(diphosphooxymethyl)pyrimidine + 2 H(+) = thiamine phosphate + CO2 + diphosphate. It carries out the reaction 4-methyl-5-(2-phosphooxyethyl)-thiazole + 4-amino-2-methyl-5-(diphosphooxymethyl)pyrimidine + H(+) = thiamine phosphate + diphosphate. Its pathway is cofactor biosynthesis; thiamine diphosphate biosynthesis; thiamine phosphate from 4-amino-2-methyl-5-diphosphomethylpyrimidine and 4-methyl-5-(2-phosphoethyl)-thiazole: step 1/1. Functionally, condenses 4-methyl-5-(beta-hydroxyethyl)thiazole monophosphate (THZ-P) and 2-methyl-4-amino-5-hydroxymethyl pyrimidine pyrophosphate (HMP-PP) to form thiamine monophosphate (TMP). The sequence is that of Thiamine-phosphate synthase from Helicobacter pylori (strain Shi470).